We begin with the raw amino-acid sequence, 431 residues long: Glutamyl-tRNA reductase (431 aa).

Residues 49-52 (TCDR), Ser-109, 114-116 (EPH), and Gln-120 each bind substrate. Cys-50 functions as the Nucleophile in the catalytic mechanism. Residue 189 to 194 (GTQEMG) participates in NADP(+) binding.

This sequence belongs to the glutamyl-tRNA reductase family. In terms of assembly, homodimer.

The enzyme catalyses (S)-4-amino-5-oxopentanoate + tRNA(Glu) + NADP(+) = L-glutamyl-tRNA(Glu) + NADPH + H(+). It participates in porphyrin-containing compound metabolism; protoporphyrin-IX biosynthesis; 5-aminolevulinate from L-glutamyl-tRNA(Glu): step 1/2. The protein operates within porphyrin-containing compound metabolism; chlorophyll biosynthesis. Functionally, catalyzes the NADPH-dependent reduction of glutamyl-tRNA(Glu) to glutamate 1-semialdehyde (GSA). This is Glutamyl-tRNA reductase from Rhodospirillum rubrum (strain ATCC 11170 / ATH 1.1.1 / DSM 467 / LMG 4362 / NCIMB 8255 / S1).